A 133-amino-acid chain; its full sequence is Small ribosomal subunit protein uS12c (133 aa).

The protein belongs to the universal ribosomal protein uS12 family. In terms of assembly, part of the 30S ribosomal subunit.

The protein localises to the plastid. Its subcellular location is the chloroplast. Functionally, with S4 and S5 plays an important role in translational accuracy. Located at the interface of the 30S and 50S subunits. The chain is Small ribosomal subunit protein uS12c (rps12) from Chlamydomonas reinhardtii (Chlamydomonas smithii).